We begin with the raw amino-acid sequence, 274 residues long: Pantothenate synthetase (274 aa).

27–34 contacts ATP; the sequence is MGALHKGH. His34 serves as the catalytic Proton donor. Gln58 contacts (R)-pantoate. Beta-alanine is bound at residue Gln58. 145–148 lines the ATP pocket; sequence GQKD. Gln151 provides a ligand contact to (R)-pantoate. Residue 182 to 185 coordinates ATP; the sequence is LSSR.

This sequence belongs to the pantothenate synthetase family. Homodimer.

The protein localises to the cytoplasm. The enzyme catalyses (R)-pantoate + beta-alanine + ATP = (R)-pantothenate + AMP + diphosphate + H(+). The protein operates within cofactor biosynthesis; (R)-pantothenate biosynthesis; (R)-pantothenate from (R)-pantoate and beta-alanine: step 1/1. Catalyzes the condensation of pantoate with beta-alanine in an ATP-dependent reaction via a pantoyl-adenylate intermediate. The protein is Pantothenate synthetase of Wolinella succinogenes (strain ATCC 29543 / DSM 1740 / CCUG 13145 / JCM 31913 / LMG 7466 / NCTC 11488 / FDC 602W) (Vibrio succinogenes).